The primary structure comprises 90 residues: Keratin-associated protein 19-1 (90 aa).

Residues 5–84 (GSYYGGLGYS…CCRPSYNGGY (80 aa)) form a 26 X 2 AA repeats of G-[YCGS] region.

The protein belongs to the KRTAP type 19 family. In terms of assembly, interacts with hair keratins. Detected in the upper portion of the hair cortex.

In terms of biological role, in the hair cortex, hair keratin intermediate filaments are embedded in an interfilamentous matrix, consisting of hair keratin-associated proteins (KRTAP), which are essential for the formation of a rigid and resistant hair shaft through their extensive disulfide bond cross-linking with abundant cysteine residues of hair keratins. The matrix proteins include the high-sulfur and high-glycine-tyrosine keratins. The protein is Keratin-associated protein 19-1 (KRTAP19-1) of Homo sapiens (Human).